An 843-amino-acid polypeptide reads, in one-letter code: Potassium transporter 10 (843 aa).

Residues 1–15 show a composition bias toward low complexity; it reads MKSPSPVDPESPSSP. Positions 1–25 are disordered; that stretch reads MKSPSPVDPESPSSPDCKGGSSSKR. The Cytoplasmic segment spans residues 1–34; sequence MKSPSPVDPESPSSPDCKGGSSSKRRRLPWRMTM. A helical membrane pass occupies residues 35 to 55; it reads SLAYQSLGVVYGDLSTSPLYV. The Vacuolar portion of the chain corresponds to 56-72; sequence YKAAFAEDIQHSETNEE. A helical membrane pass occupies residues 73–93; sequence ILGVLSFVFWTLTLVPLLKYV. Topologically, residues 94 to 183 are cytoplasmic; that stretch reads CVVLRADDNG…LLERHKVLQR (90 aa). Residues 184-204 form a helical membrane-spanning segment; that stretch reads VLLVLALVGTCMVIGDGVLTP. Residues 205–225 are Vacuolar-facing; that stretch reads AISVFSAVSGLELSMEKHQHK. The chain crosses the membrane as a helical span at residues 226-246; it reads YVEVPIACFVLVCLFCLQHYG. Over 247–249 the chain is Cytoplasmic; it reads THR. Residues 250–270 form a helical membrane-spanning segment; the sequence is VGFLFAPIVITWLLCISMIGV. Residues 271–298 are Vacuolar-facing; it reads YNIVHWEPNVYRALSPYYMYKFLKKTQR. The chain crosses the membrane as a helical span at residues 299 to 319; it reads GGWMSLGGILLCITGSEAMFA. The Cytoplasmic portion of the chain corresponds to 320-326; that stretch reads DLGHFNQ. A helical membrane pass occupies residues 327–347; it reads LSIQIAFTCMVYPSLILAYMG. Topologically, residues 348-377 are vacuolar; sequence QAAYLCKHHIIESDYRIGFYVSVPEKIRWP. Residues 378–398 traverse the membrane as a helical segment; it reads VLAIAILAAVVGSQAVITGTF. Residues 399-425 lie on the Cytoplasmic side of the membrane; sequence SMIKQCTALGCFPRVKIVHTSDKVHGQ. Residues 426 to 446 form a helical membrane-spanning segment; it reads IYIPEINWILMILCLAITIGF. Topologically, residues 447–451 are vacuolar; sequence RDTKH. The helical transmembrane segment at 452 to 472 threads the bilayer; that stretch reads LGNASGLAVITVMLVTTCLMS. The Cytoplasmic segment spans residues 473–482; it reads LVIVLCWHKS. A helical membrane pass occupies residues 483-505; it reads IFLAFGFIIFFGTIEALYFSASL. Over 506–510 the chain is Vacuolar; the sequence is IKFRE. A helical membrane pass occupies residues 511–531; it reads GAWVPIVLAFIFMAIMCIWHY. The Cytoplasmic segment spans residues 532–843; that stretch reads GTIKKYEFDL…TLEVGMIYYV (312 aa). The interval 667 to 747 is disordered; it reads AASSKPKNVC…IMSPSPSPPP (81 aa). Residues 718–735 are compositionally biased toward gly residues; the sequence is GGSGSGSGRGSSRGGGGA.

The protein belongs to the HAK/KUP transporter (TC 2.A.72.3) family. As to expression, expressed in roots, shoots, and panicle at flowering stage.

Its subcellular location is the vacuole membrane. Its function is as follows. High-affinity potassium transporter. This chain is Potassium transporter 10 (HAK10), found in Oryza sativa subsp. japonica (Rice).